The following is a 296-amino-acid chain: Co-chaperone protein DjlA (296 aa).

The Periplasmic segment spans residues 1–15 (MNLRDFFVITTWWGK). A helical transmembrane segment spans residues 16–39 (ILGAFFGYLTAGPVGALFGILVGN). Over 40-296 (FFDRGLVSYY…YELICETKGW (257 aa)) the chain is Cytoplasmic. Residues 200–225 (QHYHNQQEYKHTSSSQGQQGYKPQSP) are disordered. Over residues 211–221 (TSSSQGQQGYK) the composition is skewed to polar residues. The J domain occupies 231 to 296 (HAFALLEVSP…YELICETKGW (66 aa)).

As to quaternary structure, homodimer.

Its subcellular location is the cell inner membrane. In terms of biological role, regulatory DnaK co-chaperone. Direct interaction between DnaK and DjlA is needed for the induction of the wcaABCDE operon, involved in the synthesis of a colanic acid polysaccharide capsule, possibly through activation of the RcsB/RcsC phosphotransfer signaling pathway. The colanic acid capsule may help the bacterium survive conditions outside the host. This Legionella pneumophila subsp. pneumophila (strain Philadelphia 1 / ATCC 33152 / DSM 7513) protein is Co-chaperone protein DjlA.